Reading from the N-terminus, the 397-residue chain is UDP-GlcNAc:betaGal beta-1,3-N-acetylglucosaminyltransferase 7 (397 aa).

Topologically, residues 1 to 6 are cytoplasmic; that stretch reads MSLWKK. Residues 7 to 26 traverse the membrane as a helical segment; it reads TLYKSVCLALALLVAVTVFQ. Residues 27–397 are Lumenal-facing; sequence RSVTPGQFLQ…LTCSVKFQVL (371 aa). Asn-84, Asn-90, Asn-210, and Asn-387 each carry an N-linked (GlcNAc...) asparagine glycan.

This sequence belongs to the glycosyltransferase 31 family. In terms of tissue distribution, strongly expressed in placenta and colon. Moderately expressed in lung, stomach, small intestine and kidney. Very weakly expressed in cerebrum, cerebellum, heart and testis.

It localises to the golgi apparatus membrane. It functions in the pathway protein modification; protein glycosylation. In terms of biological role, N-acetyl glucosamine (GlcNAc) transferase that catalyzes the transfer of GlcNAc via a beta1-&gt;3 linkage from UDP-GlcNAc to the non-reducing terminal galactose (Gal) in the linearly growing chain of N- and O-linked keratan sulfate proteoglycans. Cooperates with B4GALT4 galactosyltransferase and CHST6 and CHST1 sulfotransferases to construct and elongate mono- and disulfated disaccharide units [-&gt;3Galbeta1-&gt;4(6-sulfoGlcNAcbeta)1-&gt;] and [-&gt;3(6-sulfoGalbeta)1-&gt;4(6-sulfoGlcNAcbeta)1-&gt;] within keratan sulfate polymer. Involved in biosynthesis of N-linked keratan sulfate proteoglycans in cornea, with an impact on proteoglycan fibril organization and corneal transparency. May play a role in the maintenance of tissue architecture by suppressing cellular motility and invasion. The chain is UDP-GlcNAc:betaGal beta-1,3-N-acetylglucosaminyltransferase 7 (B3gnt7) from Mus musculus (Mouse).